Consider the following 358-residue polypeptide: Protein ocs (358 aa).

The protein belongs to the lysopine/nopaline/octopine/opine/vitopine dehydrogenases family.

The catalysed reaction is D-octopine + NAD(+) + H2O = L-arginine + pyruvate + NADH + H(+). It carries out the reaction D-lysopine + NADP(+) + H2O = L-lysine + pyruvate + NADPH + H(+). Its function is as follows. Reductive condensation of pyruvate and arginine, lysine, histidine, or octopine to form octopine, lysopine, histopine, or octopinic acid, respectively. NADPH is the preferred cofactor, but NADH can also be used. This is Protein ocs (ocs) from Agrobacterium vitis (Rhizobium vitis).